The sequence spans 468 residues: ATP-dependent protease ATPase subunit HslU (468 aa).

Residues V22 and G64–E69 each bind ATP. Residues F166 to E187 form a disordered region. Acidic residues predominate over residues N169–T178. ATP is bound by residues D281, E346, and R418.

Belongs to the ClpX chaperone family. HslU subfamily. As to quaternary structure, a double ring-shaped homohexamer of HslV is capped on each side by a ring-shaped HslU homohexamer. The assembly of the HslU/HslV complex is dependent on binding of ATP.

The protein resides in the cytoplasm. ATPase subunit of a proteasome-like degradation complex; this subunit has chaperone activity. The binding of ATP and its subsequent hydrolysis by HslU are essential for unfolding of protein substrates subsequently hydrolyzed by HslV. HslU recognizes the N-terminal part of its protein substrates and unfolds these before they are guided to HslV for hydrolysis. The polypeptide is ATP-dependent protease ATPase subunit HslU (Staphylococcus carnosus (strain TM300)).